The primary structure comprises 437 residues: Phosphomethylpyrimidine synthase (437 aa).

Substrate contacts are provided by residues asparagine 69, methionine 98, tyrosine 127, histidine 163, 185–187 (SRG), 226–229 (DACR), and glutamate 265. Histidine 269 is a Zn(2+) binding site. Substrate is bound at residue tyrosine 292. Histidine 333 is a binding site for Zn(2+). [4Fe-4S] cluster contacts are provided by cysteine 409, cysteine 412, and cysteine 416.

Belongs to the ThiC family. Requires [4Fe-4S] cluster as cofactor.

It catalyses the reaction 5-amino-1-(5-phospho-beta-D-ribosyl)imidazole + S-adenosyl-L-methionine = 4-amino-2-methyl-5-(phosphooxymethyl)pyrimidine + CO + 5'-deoxyadenosine + formate + L-methionine + 3 H(+). It functions in the pathway cofactor biosynthesis; thiamine diphosphate biosynthesis. Catalyzes the synthesis of the hydroxymethylpyrimidine phosphate (HMP-P) moiety of thiamine from aminoimidazole ribotide (AIR) in a radical S-adenosyl-L-methionine (SAM)-dependent reaction. This Clostridium kluyveri (strain NBRC 12016) protein is Phosphomethylpyrimidine synthase.